The following is a 131-amino-acid chain: Large ribosomal subunit protein bL12 (131 aa).

This sequence belongs to the bacterial ribosomal protein bL12 family. As to quaternary structure, homodimer. Part of the ribosomal stalk of the 50S ribosomal subunit. Forms a multimeric L10(L12)X complex, where L10 forms an elongated spine to which 2 to 4 L12 dimers bind in a sequential fashion. Binds GTP-bound translation factors.

Its function is as follows. Forms part of the ribosomal stalk which helps the ribosome interact with GTP-bound translation factors. Is thus essential for accurate translation. The protein is Large ribosomal subunit protein bL12 of Prochlorococcus marinus (strain MIT 9215).